Here is a 116-residue protein sequence, read N- to C-terminus: CDKN2AIP N-terminal-like protein (116 aa).

The residue at position 1 (Met-1) is an N-acetylmethionine. The 93-residue stretch at 24–116 (AEQFRSYSES…RSELMRKHQS (93 aa)) folds into the XRN2-binding (XTBD) domain.

This sequence belongs to the CARF family. In terms of assembly, interacts with XRN2; the interaction is direct.

The polypeptide is CDKN2AIP N-terminal-like protein (Cdkn2aipnl) (Mus musculus (Mouse)).